A 206-amino-acid polypeptide reads, in one-letter code: Thiamine-phosphate synthase (206 aa).

Residues 38 to 42 and Asn-70 each bind 4-amino-2-methyl-5-(diphosphooxymethyl)pyrimidine; that span reads QLREK. Residues Asp-71 and Asp-90 each coordinate Mg(2+). 4-amino-2-methyl-5-(diphosphooxymethyl)pyrimidine is bound at residue Thr-109. 135–137 serves as a coordination point for 2-[(2R,5Z)-2-carboxy-4-methylthiazol-5(2H)-ylidene]ethyl phosphate; it reads TST. A 4-amino-2-methyl-5-(diphosphooxymethyl)pyrimidine-binding site is contributed by Lys-138. 2-[(2R,5Z)-2-carboxy-4-methylthiazol-5(2H)-ylidene]ethyl phosphate-binding positions include Gly-165 and 185-186; that span reads VS.

It belongs to the thiamine-phosphate synthase family. Mg(2+) serves as cofactor.

The catalysed reaction is 2-[(2R,5Z)-2-carboxy-4-methylthiazol-5(2H)-ylidene]ethyl phosphate + 4-amino-2-methyl-5-(diphosphooxymethyl)pyrimidine + 2 H(+) = thiamine phosphate + CO2 + diphosphate. It carries out the reaction 2-(2-carboxy-4-methylthiazol-5-yl)ethyl phosphate + 4-amino-2-methyl-5-(diphosphooxymethyl)pyrimidine + 2 H(+) = thiamine phosphate + CO2 + diphosphate. It catalyses the reaction 4-methyl-5-(2-phosphooxyethyl)-thiazole + 4-amino-2-methyl-5-(diphosphooxymethyl)pyrimidine + H(+) = thiamine phosphate + diphosphate. Its pathway is cofactor biosynthesis; thiamine diphosphate biosynthesis; thiamine phosphate from 4-amino-2-methyl-5-diphosphomethylpyrimidine and 4-methyl-5-(2-phosphoethyl)-thiazole: step 1/1. Its function is as follows. Condenses 4-methyl-5-(beta-hydroxyethyl)thiazole monophosphate (THZ-P) and 2-methyl-4-amino-5-hydroxymethyl pyrimidine pyrophosphate (HMP-PP) to form thiamine monophosphate (TMP). The sequence is that of Thiamine-phosphate synthase from Fusobacterium nucleatum subsp. nucleatum (strain ATCC 25586 / DSM 15643 / BCRC 10681 / CIP 101130 / JCM 8532 / KCTC 2640 / LMG 13131 / VPI 4355).